The following is a 391-amino-acid chain: Polyketide synthase 5 (391 aa).

The active site involves C164.

Belongs to the thiolase-like superfamily. Chalcone/stilbene synthases family. As to quaternary structure, homodimer. Expressed in fruits.

The catalysed reaction is (E)-4-coumaroyl-CoA + 3 malonyl-CoA + 3 H(+) = 2',4,4',6'-tetrahydroxychalcone + 3 CO2 + 4 CoA. The protein operates within secondary metabolite biosynthesis; flavonoid biosynthesis. Polyketide synthase producing naringenin chalcone. Can use p-coumaryl-CoA as substrate. The protein is Polyketide synthase 5 (PKS5) of Rubus idaeus (Raspberry).